A 229-amino-acid chain; its full sequence is Tubulin-specific chaperone B (229 aa).

Residues 170–212 (GATKFKEGVWVGVKYDEPVGKNDGSVAGVRYFDCDPKYGGFVR) form the CAP-Gly domain.

The protein belongs to the TBCB family. In terms of assembly, supercomplex made of cofactors A to E. Cofactors A and D function by capturing and stabilizing tubulin in a quasi-native conformation. Cofactor E binds to the cofactor D-tubulin complex; interaction with cofactor C then causes the release of tubulin polypeptides that are committed to the native state.

The protein resides in the cytoplasm. It is found in the cytoskeleton. Functionally, binds to alpha-tubulin folding intermediates after their interaction with cytosolic chaperonin in the pathway leading from newly synthesized tubulin to properly folded heterodimer. The protein is Tubulin-specific chaperone B of Caenorhabditis elegans.